Consider the following 883-residue polypeptide: Integrator complex subunit 6 (883 aa).

Positions 3 to 227 (ILLFLIDTSA…QCLESLVQKV (225 aa)) constitute a VWFA domain. An Inhibitory loop motif is present at residues 625-632 (MMIDEADE). The interval 666 to 686 (RRQSPAVNSHIGGKGPPAPMT) is disordered. Residue S800 is modified to Phosphoserine.

The protein belongs to the Integrator subunit 6 family. In terms of assembly, component of the Integrator complex, composed of core subunits INTS1, INTS2, INTS3, INTS4, INTS5, INTS6, INTS7, INTS8, INTS9/RC74, INTS10, INTS11/CPSF3L, INTS12, INTS13, INTS14 and INTS15. The core complex associates with protein phosphatase 2A subunits PPP2CA and PPP2R1A, to form the Integrator-PP2A (INTAC) complex.

Its subcellular location is the nucleus. It is found in the chromosome. Component of the integrator complex, a multiprotein complex that terminates RNA polymerase II (Pol II) transcription in the promoter-proximal region of genes. The integrator complex provides a quality checkpoint during transcription elongation by driving premature transcription termination of transcripts that are unfavorably configured for transcriptional elongation: the complex terminates transcription by (1) catalyzing dephosphorylation of the C-terminal domain (CTD) of Pol II subunit POLR2A/RPB1 and SUPT5H/SPT5, (2) degrading the exiting nascent RNA transcript via endonuclease activity and (3) promoting the release of Pol II from bound DNA. The integrator complex is also involved in terminating the synthesis of non-coding Pol II transcripts, such as enhancer RNAs (eRNAs), small nuclear RNAs (snRNAs), telomerase RNAs and long non-coding RNAs (lncRNAs). Within the integrator complex, INTS6 acts as a molecular adapter that promotes assembly of protein phosphatase 2A (PP2A) subunits to the integrator core complex, promoting recruitment of PP2A to transcription pause-release checkpoint. Mediates recruitment of cytoplasmic dynein to the nuclear envelope, probably as component of the integrator complex. This is Integrator complex subunit 6 (Ints6) from Mus musculus (Mouse).